The primary structure comprises 550 residues: Ribosomal protein S6 kinase beta (550 aa).

Residues 83-344 form the Protein kinase domain; that stretch reads FQLLKVLGKG…AEEIKSHAFF (262 aa). Residues 89–97 and Lys-115 each bind ATP; that span reads LGKGGYGKV. The active-site Proton acceptor is the Asp-210. The AGC-kinase C-terminal domain occupies 345 to 415; the sequence is KTTDWNLVYA…VAPSVLEMMN (71 aa). Thr-404 carries the post-translational modification Phosphothreonine. 2 disordered regions span residues 433 to 466 and 484 to 550; these read RAGAAKSPRKPGDPETASILHGGHSNLFGHGPNS and TAGG…KRVM. Phosphoserine is present on Ser-439. Residues 520–534 are compositionally biased toward low complexity; it reads TTTGNGSTTTTRPSN.

This sequence belongs to the protein kinase superfamily. AGC Ser/Thr protein kinase family. S6 kinase subfamily. Requires Mg(2+) as cofactor. May be phosphorylated on Thr-404 by let-363/TOR.

It is found in the cell projection. It localises to the axon. The protein resides in the perikaryon. It carries out the reaction L-seryl-[protein] + ATP = O-phospho-L-seryl-[protein] + ADP + H(+). The enzyme catalyses L-threonyl-[protein] + ATP = O-phospho-L-threonyl-[protein] + ADP + H(+). In terms of biological role, serine/threonine-protein kinase which regulates mRNA translation. Negatively regulates lifespan and resistance to starvation, oxidative stress, protein aggregation and P.aeruginosa-mediated infection. May regulate these processes by preventing the activation of transcription factor hif-1. Required, probably downstream of let-363/TOR, for the establishment of the proper number of germline progenitors by promoting cell cycle progression and preventing differentiation during larval development. Regulates germ cell size. In addition required for sperm production and embryo viability. Involved in axon regeneration of PLM and ALM neurons by inhibiting growth cone formation early after axotomy and later by inhibiting axon extension. Functions in axon regeneration and lifespan probably by preventing aak-2/AMPK activation. Negatively regulates autophagy. This Caenorhabditis elegans protein is Ribosomal protein S6 kinase beta.